Here is a 277-residue protein sequence, read N- to C-terminus: Protein CUSTOS (277 aa).

Disordered stretches follow at residues Met1–Pro81, Thr108–Arg182, and Ser238–Asn277. Positions Ser9–Ser18 are enriched in low complexity. Ser62 is modified (phosphoserine). Residues Arg63–Glu72 are compositionally biased toward basic and acidic residues. Thr80 is modified (phosphothreonine). A coiled-coil region spans residues Lys106–Gly141. The span at Gln115–Phe142 shows a compositional bias: basic and acidic residues. A phosphoserine mark is found at Ser158 and Ser238. Residues Thr248–Lys258 are compositionally biased toward basic residues. A Nucleolar localization signal (NLS) motif is present at residues Lys249 to Ala256. The segment covering Cys265–Asn277 has biased composition (low complexity).

It belongs to the CUSTOS family.

Its subcellular location is the nucleus envelope. Plays a role in the regulation of Wnt signaling pathway during early development. This is Protein CUSTOS from Rattus norvegicus (Rat).